The sequence spans 257 residues: N-acetylglucosaminyldiphosphoundecaprenol N-acetyl-beta-D-mannosaminyltransferase (257 aa).

This sequence belongs to the glycosyltransferase 26 family. TagA/TarA subfamily.

It catalyses the reaction UDP-N-acetyl-alpha-D-mannosamine + N-acetyl-alpha-D-glucosaminyl-di-trans,octa-cis-undecaprenyl diphosphate = N-acetyl-beta-D-mannosaminyl-(1-&gt;4)-N-acetyl-alpha-D-glucosaminyl di-trans,octa-cis-undecaprenyl diphosphate + UDP + H(+). Its pathway is cell wall biogenesis; poly(ribitol phosphate) teichoic acid biosynthesis. In terms of biological role, catalyzes the conversion of GlcNAc-PP-undecaprenol into ManNAc-GlcNAc-PP-undecaprenol, the first committed lipid intermediate in the de novo synthesis of teichoic acid. The protein is N-acetylglucosaminyldiphosphoundecaprenol N-acetyl-beta-D-mannosaminyltransferase of Bacillus spizizenii (strain ATCC 23059 / NRRL B-14472 / W23) (Bacillus subtilis subsp. spizizenii).